The sequence spans 331 residues: 6-phosphogluconolactonase (331 aa).

Belongs to the cycloisomerase 2 family.

The enzyme catalyses 6-phospho-D-glucono-1,5-lactone + H2O = 6-phospho-D-gluconate + H(+). The protein operates within carbohydrate degradation; pentose phosphate pathway; D-ribulose 5-phosphate from D-glucose 6-phosphate (oxidative stage): step 2/3. Its function is as follows. Catalyzes the hydrolysis of 6-phosphogluconolactone to 6-phosphogluconate. The protein is 6-phosphogluconolactonase of Salmonella typhi.